The primary structure comprises 34 residues: Egg-releasing peptide (34 aa).

This Aplysia californica (California sea hare) protein is Egg-releasing peptide.